Consider the following 607-residue polypeptide: UvrABC system protein C (607 aa).

A GIY-YIG domain is found at 15–94 (ENPGVYLMKN…IKRHRPYFNV (80 aa)). The UVR domain occupies 204–239 (DQVLKLLIRLMNEASARLDYETAALRRDQIASIKEV).

The protein belongs to the UvrC family. In terms of assembly, interacts with UvrB in an incision complex.

Its subcellular location is the cytoplasm. The UvrABC repair system catalyzes the recognition and processing of DNA lesions. UvrC both incises the 5' and 3' sides of the lesion. The N-terminal half is responsible for the 3' incision and the C-terminal half is responsible for the 5' incision. This is UvrABC system protein C from Dehalococcoides mccartyi (strain ATCC BAA-2100 / JCM 16839 / KCTC 5957 / BAV1).